Reading from the N-terminus, the 417-residue chain is F-box protein At3g07870 (417 aa).

In terms of domain architecture, F-box spans 22–68 (GGGLESLPEDIIADIFSRLPISSIARLMFVCRSWRSVLTQHGRLSSS).

The sequence is that of F-box protein At3g07870 from Arabidopsis thaliana (Mouse-ear cress).